Here is a 239-residue protein sequence, read N- to C-terminus: Major centromere autoantigen B (239 aa).

The disordered stretch occupies residues 28–185 (AGFGGGPNAT…DDEVPVPSFG (158 aa)). Residues Thr37 and Thr39 each carry the phosphothreonine modification. Composition is skewed to acidic residues over residues 46-117 (GEEE…EAED) and 148-179 (GEEDSESDSEEEEEDDDEDEDDEDDEEEDDEV). A homodimerization region spans residues 176–239 (DDEVPVPSFG…AGARGLGHQS (64 aa)).

Antiparallel homodimer. Interacts with CENPT. Identified in a centromere complex containing histones H2A, H2B and H4, and at least CENPA, CENPB, CENPC, CENPT, CENPN, HJURP, SUPT16H, SSRP1 and RSF1. Post-translationally, poly-ADP-ribosylated by PARP1. N-terminally methylated by METTL11A/NTM1. Alpha-N-methylation is stimulated in response extracellular stimuli, including increased cell density and heat shock, and seems to facilitate binding to CENP-B boxes. Chromatin-bound CENP-B is primarily trimethylated.

It localises to the nucleus. The protein localises to the chromosome. The protein resides in the centromere. Its function is as follows. Interacts with centromeric heterochromatin in chromosomes and binds to a specific 17 bp subset of alphoid satellite DNA, called the CENP-B box. May organize arrays of centromere satellite DNA into a higher-order structure which then directs centromere formation and kinetochore assembly in mammalian chromosomes. This is Major centromere autoantigen B (CENPB) from Ovis aries (Sheep).